The primary structure comprises 225 residues: Transcriptional regulatory protein CssR (225 aa).

A Response regulatory domain is found at 4 to 117; sequence TIYLVEDEDN…ELIIRVQKLL (114 aa). Aspartate 52 carries the 4-aspartylphosphate modification. A DNA-binding region (ompR/PhoB-type) is located at residues 129–224; it reads KNEIAVSSYR…IYGFGYRMMS (96 aa).

In terms of processing, phosphorylated by CssS.

The protein resides in the cytoplasm. In terms of biological role, member of the two-component regulatory system CssS/CssR required to control the cellular response to secretion stress. In Bacillus subtilis (strain 168), this protein is Transcriptional regulatory protein CssR (cssR).